We begin with the raw amino-acid sequence, 152 residues long: MGDEKSLAHTRWNCKYHIVFAPKYRRQAFYGEKRRAVGSILRKLCEWKNVRILEAECCADHIHMLLEIPPKMSVSSFMGYLKGKSSLMLYEQFGDLKFKYRNREFWCRGYYVDTVGKNTAKIQDYIKHQLEEDKMGEQLSIPYPGSPFTGRK.

Mg(2+) contacts are provided by His61 and His63. The active-site Nucleophile is the Tyr125. A Mg(2+)-binding site is contributed by Gln129.

Belongs to the transposase 17 family. As to quaternary structure, homodimer. Mg(2+) is required as a cofactor.

Functionally, transposase responsible for transposition of the IS200 insertion sequence (IS) element. Transposition occurs in 2 main steps, excision from the donor DNA 'top strand' into a single strand circle and its subsequent reinsertion into the DNA target. This increases the copy number of the IS. This chain is Transposase for insertion sequence element IS200 (tnpA1), found in Salmonella typhi.